The chain runs to 555 residues: uncharacterized protein (555 aa).

Residues 1-83 (MSNEDETTRL…GRRKLLCLYG (83 aa)) lie on the Extracellular side of the membrane. The helical transmembrane segment at 84–104 (LVMIICIAESISMTATIPLVM) threads the bilayer. Residues 105-125 (DKVAEGISDENGHYDSVAVQT) are Cytoplasmic-facing. The chain crosses the membrane as a helical span at residues 126-146 (IVSSISSSTMMIAGAISIFMA). At 147-188 (GKWGELSDRIGRVRVFKYMSGIRVIGLLTHVFTLSSKMKYHK) the chain is on the extracellular side. Residues 189 to 209 (WAIVLTACIVPSFGGLFALVA) traverse the membrane as a helical segment. The Cytoplasmic segment spans residues 210–229 (NGNSYVSDIVKTEHRMVTIG). A helical membrane pass occupies residues 230–250 (IMMSCIYATMGVGPMFGSFLV). Over 251–257 (KWTHGNG) the chain is Extracellular. Residues 258–278 (FIPIYTSIAFVILALIICETI) form a helical membrane-spanning segment. Topologically, residues 279–356 (MVEPRHETQM…LVPRHTVILL (78 aa)) are cytoplasmic. Residues 289 to 311 (AHSQSTYTKRREKLRSQSGSDDA) are disordered. The chain crosses the membrane as a helical span at residues 357–377 (IVLDILFVCGTTSCMPALILF). Residues 378-386 (STYEYKWHA) lie on the Extracellular side of the membrane. Residues 387-407 (VELGYFISILGIGRGVVLLVV) form a helical membrane-spanning segment. Residues 408–428 (SPTLLYTLKRIYQHLNHSIDK) lie on the Cytoplasmic side of the membrane. A helical transmembrane segment spans residues 429–449 (IDIFCIQFSMIVITLSLFVMI). The Extracellular portion of the chain corresponds to 450-459 (RFGEKTPTSM). Residues 460–480 (IIFALLQALSAFCSPTLQSGI) form a helical membrane-spanning segment. Residues 481-491 (IKYTSKKHTGE) lie on the Cytoplasmic side of the membrane. A helical membrane pass occupies residues 492–512 (MFGAMALVRSCVMLVIPPILL). At 513–523 (KLYGSTVSVNP) the chain is on the extracellular side. A helical transmembrane segment spans residues 524-544 (SLFMYIPFSTSIVAILLTFFL). Residues 545–555 (RIYKNPPLDGP) lie on the Cytoplasmic side of the membrane.

The protein resides in the membrane. This is an uncharacterized protein from Saccharomyces cerevisiae (strain ATCC 204508 / S288c) (Baker's yeast).